The following is a 384-amino-acid chain: Putative RNA methyltransferase slr0064 (384 aa).

The THUMP domain occupies 53 to 164; the sequence is LLYRINLWSR…QNHCQLSLDS (112 aa).

This sequence belongs to the methyltransferase superfamily.

This is Putative RNA methyltransferase slr0064 from Synechocystis sp. (strain ATCC 27184 / PCC 6803 / Kazusa).